A 444-amino-acid chain; its full sequence is MARKYFGTDGVRGKVGEYPITPDFVMKLGWAAGKVLSKKGTRKVLIGKDTRISGYMLESALEAGLSAAGLKAILMGPMPTPAVAYLTRTFRAEAGIVISASHNPYYDNGIKFFSADGTKLPDEVEMAIEAELDHELKCVESAELGKALRIDDAAGRYIEFCKSTFPSNLSLEGLKMVVDCGHGATYHIAPSVFRELGAEVIAIGCSPDGLNINDGVGSTAPEALAAKVLECKADLGVAFDGDGDRLVMVDNTGYIIDGDEILYIIARDALRNGRLKGGVVGTLMANMGLELALQTLGIPFARAKVGDRYVLEMMNEKGWRIGGENSGHIICLDQTTTGDGIVAALQVLTAICTAEMPLAKLRSGMNKFPQVLVNVRFAEGRDPLAADAVQQEVAKVEQELAGRGRVLLRKSGTEPLIRVMVEGEHEQQVRDMAQRIAQQVESAF.

Ser101 (phosphoserine intermediate) is an active-site residue. Residues Ser101, Asp240, Asp242, and Asp244 each coordinate Mg(2+). Ser101 carries the post-translational modification Phosphoserine.

Belongs to the phosphohexose mutase family. Requires Mg(2+) as cofactor. Activated by phosphorylation.

It catalyses the reaction alpha-D-glucosamine 1-phosphate = D-glucosamine 6-phosphate. Its function is as follows. Catalyzes the conversion of glucosamine-6-phosphate to glucosamine-1-phosphate. The protein is Phosphoglucosamine mutase of Aeromonas hydrophila subsp. hydrophila (strain ATCC 7966 / DSM 30187 / BCRC 13018 / CCUG 14551 / JCM 1027 / KCTC 2358 / NCIMB 9240 / NCTC 8049).